We begin with the raw amino-acid sequence, 323 residues long: Ribose 1,5-bisphosphate isomerase (323 aa).

Residues 22 to 25 and arginine 65 each bind substrate; that span reads RGAA. The active-site Proton acceptor is cysteine 130. Aspartate 199 acts as the Proton donor in catalysis. Substrate contacts are provided by residues 209–210 and lysine 235; that span reads NK. Residue lysine 210 forms a Glycyl lysine isopeptide (Lys-Gly) (interchain with G-Cter in SAMP2) linkage.

The protein belongs to the eIF-2B alpha/beta/delta subunits family. R15P isomerase subfamily.

It carries out the reaction alpha-D-ribose 1,5-bisphosphate = D-ribulose 1,5-bisphosphate. Its function is as follows. Catalyzes the isomerization of ribose 1,5-bisphosphate (R15P) to ribulose 1,5-bisphosphate (RuBP), the CO(2) acceptor and substrate for RubisCO. Functions in an archaeal AMP degradation pathway, together with AMP phosphorylase and RubisCO. The protein is Ribose 1,5-bisphosphate isomerase of Haloferax volcanii (strain ATCC 29605 / DSM 3757 / JCM 8879 / NBRC 14742 / NCIMB 2012 / VKM B-1768 / DS2) (Halobacterium volcanii).